The following is a 61-amino-acid chain: MAKKSMIIKQQREPKFAVRAYTRCERCGRPHSVLRKFKLCRICFRELAYKGQIPGVKKASW.

C24, C27, C40, and C43 together coordinate Zn(2+).

The protein belongs to the universal ribosomal protein uS14 family. Zinc-binding uS14 subfamily. As to quaternary structure, part of the 30S ribosomal subunit. Contacts proteins S3 and S10. Zn(2+) is required as a cofactor.

Binds 16S rRNA, required for the assembly of 30S particles and may also be responsible for determining the conformation of the 16S rRNA at the A site. This is Small ribosomal subunit protein uS14 from Brevibacillus brevis (strain 47 / JCM 6285 / NBRC 100599).